The following is a 460-amino-acid chain: Armadillo repeat-containing protein LFR (460 aa).

The segment at 1 to 30 is disordered; that stretch reads MQKRELGKSGGNSGGSSGPPAKRGRPFGST. The segment covering 8 to 17 has biased composition (gly residues); the sequence is KSGGNSGGSS. ARM repeat units follow at residues 227–269, 323–362, and 366–407; these read DNEV…NLAH, NEPF…NLVE, and DCRL…NLVS.

As to quaternary structure, interacts with AS2. In terms of tissue distribution, expressed in roots, leaves, stems and flowers.

Its subcellular location is the nucleus. Functionally, involved in leaf and flower development. Plays roles in leaf development partly by associating with AS2 and repressing KNAT1/BP transcription. Required for the formation of anther cell layers and normal expression of genes that regulates anther development. The polypeptide is Armadillo repeat-containing protein LFR (Arabidopsis thaliana (Mouse-ear cress)).